We begin with the raw amino-acid sequence, 389 residues long: Urotensin-2 receptor (389 aa).

Over residues 1-10 the composition is skewed to polar residues; the sequence is MALTPESPSS. Positions 1 to 39 are disordered; that stretch reads MALTPESPSSFPGLAATGSSVPEPPGGPNATLNSSWASP. Residues 1–54 lie on the Extracellular side of the membrane; that stretch reads MALTPESPSSFPGLAATGSSVPEPPGGPNATLNSSWASPTEPSSLEDLVATGTI. Residues Asn-29 and Asn-33 are each glycosylated (N-linked (GlcNAc...) asparagine). A compositionally biased stretch (polar residues) spans 30 to 39; sequence ATLNSSWASP. Residues 55-77 traverse the membrane as a helical segment; that stretch reads GTLLSAMGVVGVVGNAYTLVVTC. Residues 78 to 87 are Cytoplasmic-facing; the sequence is RSLRAVASMY. The chain crosses the membrane as a helical span at residues 88–113; it reads VYVVNLALADLLYLLSIPFIVATYVT. The Extracellular segment spans residues 114–124; sequence KEWHFGDVGCR. An intrachain disulfide couples Cys-123 to Cys-199. Residues 125–146 traverse the membrane as a helical segment; that stretch reads VLFGLDFLTMHASIFTLTVMSS. Residues 147–167 are Cytoplasmic-facing; the sequence is ERYAAVLRPLDTVQRPKGYRK. Residues 168–186 traverse the membrane as a helical segment; the sequence is LLALGTWLLALLLTLPVML. At 187 to 209 the chain is on the extracellular side; it reads AMRLVRRGPKSLCLPAWGPRAHR. The chain crosses the membrane as a helical span at residues 210-232; that stretch reads AYLTLLFATSIAGPGLLIGLLYA. Residues 233–258 are Cytoplasmic-facing; that stretch reads RLARAYRRSQRASFKRARRPGARALR. The helical transmembrane segment at 259 to 284 threads the bilayer; sequence LVLGIVLLFWACFLPFWLWQLLAQYH. The Extracellular portion of the chain corresponds to 285 to 297; it reads QAPLAPRTARIVN. The helical transmembrane segment at 298-318 threads the bilayer; it reads YLTTCLTYGNSCANPFLYTLL. Residues 319-389 are Cytoplasmic-facing; the sequence is TRNYRDHLRG…PAPEGPRAPA (71 aa). The tract at residues 328–389 is disordered; that stretch reads GRVRGPGSGG…PAPEGPRAPA (62 aa). The segment covering 331 to 340 has biased composition (gly residues); that stretch reads RGPGSGGGRG. Residues 355-368 show a composition bias toward polar residues; the sequence is SGRSLSSCSPQPTD. Positions 377–389 are enriched in pro residues; the sequence is PARPAPEGPRAPA.

The protein belongs to the G-protein coupled receptor 1 family. In terms of tissue distribution, most abundant expression in the heart and pancreas.

It localises to the cell membrane. Functionally, high affinity receptor for urotensin-2 and urotensin-2B. The activity of this receptor is mediated by a G-protein that activate a phosphatidylinositol-calcium second messenger system. This is Urotensin-2 receptor (UTS2R) from Homo sapiens (Human).